The primary structure comprises 260 residues: Hydroxyacylglutathione hydrolase (260 aa).

7 residues coordinate Zn(2+): His-61, His-63, Asp-65, His-66, His-119, Asp-138, and His-176.

It belongs to the metallo-beta-lactamase superfamily. Glyoxalase II family. In terms of assembly, monomer. It depends on Zn(2+) as a cofactor.

The catalysed reaction is an S-(2-hydroxyacyl)glutathione + H2O = a 2-hydroxy carboxylate + glutathione + H(+). Its pathway is secondary metabolite metabolism; methylglyoxal degradation; (R)-lactate from methylglyoxal: step 2/2. In terms of biological role, thiolesterase that catalyzes the hydrolysis of S-D-lactoyl-glutathione to form glutathione and D-lactic acid. This Brucella anthropi (strain ATCC 49188 / DSM 6882 / CCUG 24695 / JCM 21032 / LMG 3331 / NBRC 15819 / NCTC 12168 / Alc 37) (Ochrobactrum anthropi) protein is Hydroxyacylglutathione hydrolase.